Consider the following 401-residue polypeptide: Argininosuccinate synthase (401 aa).

ATP is bound by residues 9 to 17 (AFSGGLDTS) and alanine 35. Residues tyrosine 88 and serine 93 each contribute to the L-citrulline site. An ATP-binding site is contributed by glycine 117. L-aspartate is bound by residues threonine 119, asparagine 123, and aspartate 124. An L-citrulline-binding site is contributed by asparagine 123. L-citrulline is bound by residues arginine 127 and tyrosine 273.

This sequence belongs to the argininosuccinate synthase family. Type 1 subfamily. In terms of assembly, homotetramer.

The protein localises to the cytoplasm. It carries out the reaction L-citrulline + L-aspartate + ATP = 2-(N(omega)-L-arginino)succinate + AMP + diphosphate + H(+). Its pathway is amino-acid biosynthesis; L-arginine biosynthesis; L-arginine from L-ornithine and carbamoyl phosphate: step 2/3. The polypeptide is Argininosuccinate synthase (Xylella fastidiosa (strain Temecula1 / ATCC 700964)).